The sequence spans 553 residues: Dihydroxy-acid dehydratase (553 aa).

A Mg(2+)-binding site is contributed by Asp78. Cys119 provides a ligand contact to [2Fe-2S] cluster. The Mg(2+) site is built by Asp120 and Lys121. Lys121 bears the N6-carboxylysine mark. A [2Fe-2S] cluster-binding site is contributed by Cys191. Residue Glu442 participates in Mg(2+) binding. Ser468 serves as the catalytic Proton acceptor.

Belongs to the IlvD/Edd family. In terms of assembly, homodimer. The cofactor is [2Fe-2S] cluster. Mg(2+) is required as a cofactor.

It carries out the reaction (2R)-2,3-dihydroxy-3-methylbutanoate = 3-methyl-2-oxobutanoate + H2O. It catalyses the reaction (2R,3R)-2,3-dihydroxy-3-methylpentanoate = (S)-3-methyl-2-oxopentanoate + H2O. The protein operates within amino-acid biosynthesis; L-isoleucine biosynthesis; L-isoleucine from 2-oxobutanoate: step 3/4. It functions in the pathway amino-acid biosynthesis; L-valine biosynthesis; L-valine from pyruvate: step 3/4. Functionally, functions in the biosynthesis of branched-chain amino acids. Catalyzes the dehydration of (2R,3R)-2,3-dihydroxy-3-methylpentanoate (2,3-dihydroxy-3-methylvalerate) into 2-oxo-3-methylpentanoate (2-oxo-3-methylvalerate) and of (2R)-2,3-dihydroxy-3-methylbutanoate (2,3-dihydroxyisovalerate) into 2-oxo-3-methylbutanoate (2-oxoisovalerate), the penultimate precursor to L-isoleucine and L-valine, respectively. In Carboxydothermus hydrogenoformans (strain ATCC BAA-161 / DSM 6008 / Z-2901), this protein is Dihydroxy-acid dehydratase.